The primary structure comprises 284 residues: Pantothenate synthetase (284 aa).

30–37 (MGNLHDGH) contributes to the ATP binding site. H37 functions as the Proton donor in the catalytic mechanism. (R)-pantoate is bound at residue Q61. Q61 provides a ligand contact to beta-alanine. 149–152 (GEKD) is an ATP binding site. Q155 contacts (R)-pantoate. Residues I178 and 186–189 (LSSR) contribute to the ATP site.

This sequence belongs to the pantothenate synthetase family. As to quaternary structure, homodimer.

It localises to the cytoplasm. The catalysed reaction is (R)-pantoate + beta-alanine + ATP = (R)-pantothenate + AMP + diphosphate + H(+). Its pathway is cofactor biosynthesis; (R)-pantothenate biosynthesis; (R)-pantothenate from (R)-pantoate and beta-alanine: step 1/1. Catalyzes the condensation of pantoate with beta-alanine in an ATP-dependent reaction via a pantoyl-adenylate intermediate. This is Pantothenate synthetase from Salmonella typhi.